The chain runs to 451 residues: Kynureninase (451 aa).

Pyridoxal 5'-phosphate is bound by residues leucine 131, serine 132, 159 to 162 (FPSD), serine 215, aspartate 244, histidine 247, and tyrosine 269. An N6-(pyridoxal phosphate)lysine modification is found at lysine 270. 2 residues coordinate pyridoxal 5'-phosphate: tryptophan 303 and asparagine 331.

Belongs to the kynureninase family. As to quaternary structure, homodimer. It depends on pyridoxal 5'-phosphate as a cofactor.

Its subcellular location is the cytoplasm. It catalyses the reaction L-kynurenine + H2O = anthranilate + L-alanine + H(+). The enzyme catalyses 3-hydroxy-L-kynurenine + H2O = 3-hydroxyanthranilate + L-alanine + H(+). It participates in amino-acid degradation; L-kynurenine degradation; L-alanine and anthranilate from L-kynurenine: step 1/1. Its pathway is cofactor biosynthesis; NAD(+) biosynthesis; quinolinate from L-kynurenine: step 2/3. In terms of biological role, catalyzes the cleavage of L-kynurenine (L-Kyn) and L-3-hydroxykynurenine (L-3OHKyn) into anthranilic acid (AA) and 3-hydroxyanthranilic acid (3-OHAA), respectively. This Dictyostelium discoideum (Social amoeba) protein is Kynureninase.